The sequence spans 865 residues: cGMP-specific 3',5'-cyclic phosphodiesterase (865 aa).

Ser92 carries the phosphoserine modification. GAF domains follow at residues 154-304 and 336-493; these read DVTA…GIVL and SLEV…GLGI. The PDEase domain maps to 526 to 850; the sequence is ETRELQALSA…QKWQALAEQQ (325 aa). The Proton donor role is filled by His603. His607, His643, Asp644, and Asp754 together coordinate Zn(2+). Residue Asp644 participates in Mg(2+) binding. Position 807 (Gln807) interacts with 3',5'-cyclic GMP.

This sequence belongs to the cyclic nucleotide phosphodiesterase family. Zn(2+) serves as cofactor. Requires Mg(2+) as cofactor. Post-translationally, phosphorylation is regulated by binding of cGMP to the two allosteric sites. Phosphorylation by PRKG1 leads to its activation.

It carries out the reaction 3',5'-cyclic GMP + H2O = GMP + H(+). It participates in purine metabolism; 3',5'-cyclic GMP degradation; GMP from 3',5'-cyclic GMP: step 1/1. Plays a role in signal transduction by regulating the intracellular concentration of cyclic nucleotides. This phosphodiesterase catalyzes the specific hydrolysis of cGMP to 5'-GMP. Specifically regulates nitric-oxide-generated cGMP. The chain is cGMP-specific 3',5'-cyclic phosphodiesterase (Pde5a) from Mus musculus (Mouse).